Consider the following 399-residue polypeptide: Chorismate synthase (399 aa).

NADP(+) is bound by residues Arg40 and Arg46. FMN contacts are provided by residues 134–136 (RAS), 255–256 (QA), Gly299, 314–318 (KPIST), and Arg340.

This sequence belongs to the chorismate synthase family. In terms of assembly, homotetramer. It depends on FMNH2 as a cofactor.

The enzyme catalyses 5-O-(1-carboxyvinyl)-3-phosphoshikimate = chorismate + phosphate. The protein operates within metabolic intermediate biosynthesis; chorismate biosynthesis; chorismate from D-erythrose 4-phosphate and phosphoenolpyruvate: step 7/7. In terms of biological role, catalyzes the anti-1,4-elimination of the C-3 phosphate and the C-6 proR hydrogen from 5-enolpyruvylshikimate-3-phosphate (EPSP) to yield chorismate, which is the branch point compound that serves as the starting substrate for the three terminal pathways of aromatic amino acid biosynthesis. This reaction introduces a second double bond into the aromatic ring system. This chain is Chorismate synthase, found in Mycolicibacterium smegmatis (strain ATCC 700084 / mc(2)155) (Mycobacterium smegmatis).